The primary structure comprises 462 residues: 3-isopropylmalate dehydratase large subunit (462 aa).

C337, C397, and C400 together coordinate [4Fe-4S] cluster.

It belongs to the aconitase/IPM isomerase family. LeuC type 1 subfamily. Heterodimer of LeuC and LeuD. [4Fe-4S] cluster is required as a cofactor.

The enzyme catalyses (2R,3S)-3-isopropylmalate = (2S)-2-isopropylmalate. It functions in the pathway amino-acid biosynthesis; L-leucine biosynthesis; L-leucine from 3-methyl-2-oxobutanoate: step 2/4. Its function is as follows. Catalyzes the isomerization between 2-isopropylmalate and 3-isopropylmalate, via the formation of 2-isopropylmaleate. This chain is 3-isopropylmalate dehydratase large subunit, found in Listeria welshimeri serovar 6b (strain ATCC 35897 / DSM 20650 / CCUG 15529 / CIP 8149 / NCTC 11857 / SLCC 5334 / V8).